A 247-amino-acid polypeptide reads, in one-letter code: ATP synthase subunit a, chloroplastic (247 aa).

A run of 5 helical transmembrane segments spans residues 38-58 (QVLITSWVVIAILLGSVTIAV), 95-115 (VPFIGTMFLFIFVSNWSGALF), 134-154 (INTTVALALPTSVAYFYAGLT), 199-219 (LVVVVLVSLVPSVVPIPVMFL), and 220-240 (GLFTSGIQALIFATLAAAYIG).

This sequence belongs to the ATPase A chain family. In terms of assembly, F-type ATPases have 2 components, CF(1) - the catalytic core - and CF(0) - the membrane proton channel. CF(1) has five subunits: alpha(3), beta(3), gamma(1), delta(1), epsilon(1). CF(0) has four main subunits: a, b, b' and c.

It localises to the plastid. It is found in the chloroplast thylakoid membrane. In terms of biological role, key component of the proton channel; it plays a direct role in the translocation of protons across the membrane. This Piper cenocladum (Ant piper) protein is ATP synthase subunit a, chloroplastic.